A 209-amino-acid polypeptide reads, in one-letter code: A-type ATP synthase subunit D (209 aa).

Belongs to the V-ATPase D subunit family. As to quaternary structure, has multiple subunits with at least A(3), B(3), C, D, E, F, H, I and proteolipid K(x).

The protein localises to the cell membrane. Component of the A-type ATP synthase that produces ATP from ADP in the presence of a proton gradient across the membrane. The sequence is that of A-type ATP synthase subunit D from Archaeoglobus fulgidus (strain ATCC 49558 / DSM 4304 / JCM 9628 / NBRC 100126 / VC-16).